The following is a 142-amino-acid chain: Hemoglobin subunit alpha (142 aa).

The Globin domain occupies 2–142 (HLTADDKKHI…VSNVLTSKYR (141 aa)). Positions 59 and 88 each coordinate heme b.

It belongs to the globin family. In terms of assembly, heterotetramer of two alpha chains and two beta chains. Red blood cells.

Its function is as follows. Involved in oxygen transport from the lung to the various peripheral tissues. The protein is Hemoglobin subunit alpha (hba-A) of Xenopus tropicalis (Western clawed frog).